Here is a 367-residue protein sequence, read N- to C-terminus: Peptidyl-prolyl cis-trans isomerase D (367 aa).

The PPIase cyclophilin-type domain maps to Phe7–Glu171. TPR repeat units follow at residues Ile213 to Tyr246, Ile264 to Ala297, and Ala302 to Asp335.

This sequence belongs to the cyclophilin-type PPIase family. PPIase D subfamily.

It is found in the cytoplasm. It catalyses the reaction [protein]-peptidylproline (omega=180) = [protein]-peptidylproline (omega=0). PPIases accelerate the folding of proteins. It catalyzes the cis-trans isomerization of proline imidic peptide bonds in oligopeptides. The sequence is that of Peptidyl-prolyl cis-trans isomerase D (CPR6) from Yarrowia lipolytica (strain CLIB 122 / E 150) (Yeast).